The chain runs to 74 residues: Small ribosomal subunit protein bS18 (74 aa).

It belongs to the bacterial ribosomal protein bS18 family. In terms of assembly, part of the 30S ribosomal subunit. Forms a tight heterodimer with protein bS6.

Binds as a heterodimer with protein bS6 to the central domain of the 16S rRNA, where it helps stabilize the platform of the 30S subunit. The sequence is that of Small ribosomal subunit protein bS18 from Alkalilimnicola ehrlichii (strain ATCC BAA-1101 / DSM 17681 / MLHE-1).